A 72-amino-acid polypeptide reads, in one-letter code: Hydrophobic protein OSR8 (72 aa).

2 consecutive transmembrane segments (helical) span residues 9–29 and 39–59; these read FLEILLAIILPPLGVFLRFGC and LLTILGYVPGIIYAVYVLVAL.

This sequence belongs to the UPF0057 (PMP3) family.

The protein resides in the membrane. The chain is Hydrophobic protein OSR8 (OSR8) from Oryza sativa subsp. japonica (Rice).